A 379-amino-acid chain; its full sequence is S-(hydroxymethyl)glutathione dehydrogenase (379 aa).

Cys-47 is a binding site for Zn(2+). Residue His-48 participates in NAD(+) binding. Zn(2+) is bound by residues His-69, Glu-70, Cys-99, Cys-102, Cys-105, Cys-113, and Cys-176. Residues 201–206 (GAGCIG), Asp-225, and 296–298 (IGV) each bind NAD(+).

Belongs to the zinc-containing alcohol dehydrogenase family. Class-III subfamily. It depends on Zn(2+) as a cofactor.

It carries out the reaction a primary alcohol + NAD(+) = an aldehyde + NADH + H(+). The catalysed reaction is a secondary alcohol + NAD(+) = a ketone + NADH + H(+). It catalyses the reaction S-(hydroxymethyl)glutathione + NADP(+) = S-formylglutathione + NADPH + H(+). The enzyme catalyses S-(hydroxymethyl)glutathione + NAD(+) = S-formylglutathione + NADH + H(+). It carries out the reaction S-nitrosoglutathione + NADH + H(+) = S-(hydroxysulfenamide)glutathione + NAD(+). Its function is as follows. Oxidizes long-chain alcohols and, in the presence of glutathione, is able to oxidize formaldehyde. Also acts as a S-nitroso-glutathione reductase by catalyzing the NADH-dependent reduction of S-nitrosoglutathione, thereby regulating protein S-nitrosylation. The chain is S-(hydroxymethyl)glutathione dehydrogenase (FLD1) from Komagataella pastoris (Yeast).